A 308-amino-acid polypeptide reads, in one-letter code: Glutaminase (308 aa).

Residues serine 65, asparagine 116, glutamate 161, asparagine 168, tyrosine 192, tyrosine 244, and valine 262 each contribute to the substrate site.

It belongs to the glutaminase family. As to quaternary structure, homotetramer.

The enzyme catalyses L-glutamine + H2O = L-glutamate + NH4(+). The sequence is that of Glutaminase from Geobacillus kaustophilus (strain HTA426).